Here is a 548-residue protein sequence, read N- to C-terminus: Folylpolyglutamate synthase (548 aa).

130–133 (GKGS) lines the ATP pocket. Serine 157, glutamate 234, and histidine 262 together coordinate Mg(2+). Residues arginine 382 and aspartate 396 each contribute to the ATP site.

Belongs to the folylpolyglutamate synthase family. Requires a monovalent cation as cofactor.

It is found in the mitochondrion inner membrane. The protein resides in the mitochondrion matrix. It localises to the cytoplasm. The catalysed reaction is (6S)-5,6,7,8-tetrahydrofolyl-(gamma-L-Glu)(n) + L-glutamate + ATP = (6S)-5,6,7,8-tetrahydrofolyl-(gamma-L-Glu)(n+1) + ADP + phosphate + H(+). Its pathway is cofactor biosynthesis; tetrahydrofolylpolyglutamate biosynthesis. Catalyzes conversion of folates to polyglutamate derivatives allowing concentration of folate compounds in the cell and the intracellular retention of these cofactors, which are important substrates for most of the folate-dependent enzymes that are involved in one-carbon transfer reactions involved in purine, pyrimidine and amino acid synthesis. Required for methionine synthesis and maintenance of intact mitochondrial DNA. Involved in telomere maintenance. The protein is Folylpolyglutamate synthase of Saccharomyces cerevisiae (strain RM11-1a) (Baker's yeast).